The sequence spans 240 residues: Keratinocyte-associated protein 3 (240 aa).

4 consecutive transmembrane segments (helical) span residues 21–41, 63–83, 95–115, and 163–183; these read VGLA…VLHG, VISV…LLAS, LLTL…GLLL, and ALAL…LSGY.

Belongs to the TMEM54 family.

The protein resides in the membrane. The protein is Keratinocyte-associated protein 3 (Krtcap3) of Mus musculus (Mouse).